Consider the following 626-residue polypeptide: Chaperone protein HtpG (626 aa).

The tract at residues 1–341 (METKQFKAES…SEDLSLNISR (341 aa)) is a; substrate-binding. The tract at residues 342–552 (EILQHDRQLK…EGELSIEMEK (211 aa)) is b. A disordered region spans residues 490–509 (DLGIEGEEKENTSSSDDKEN). Basic and acidic residues predominate over residues 498 to 509 (KENTSSSDDKEN). Residues 553–626 (VLNAMPNNQN…FTNNICKIMK (74 aa)) are c.

Belongs to the heat shock protein 90 family. As to quaternary structure, homodimer.

It localises to the cytoplasm. In terms of biological role, molecular chaperone. Has ATPase activity. The chain is Chaperone protein HtpG from Clostridium botulinum (strain Loch Maree / Type A3).